Reading from the N-terminus, the 248-residue chain is Tyrosine recombinase XerD-like (248 aa).

In terms of domain architecture, Core-binding (CB) spans M1–Y72. The Tyr recombinase domain occupies S92–M248. R213 is a catalytic residue. Catalysis depends on Y245, which acts as the O-(3'-phospho-DNA)-tyrosine intermediate.

This sequence belongs to the 'phage' integrase family. XerD-like subfamily.

It is found in the cytoplasm. In terms of biological role, putative tyrosine recombinase. Not involved in the cutting and rejoining of the recombining DNA molecules on dif(SL) site. The sequence is that of Tyrosine recombinase XerD-like from Streptococcus equi subsp. zooepidemicus (strain H70).